We begin with the raw amino-acid sequence, 635 residues long: Chaperone protein HtpG (635 aa).

The a; substrate-binding stretch occupies residues 1 to 343; the sequence is MTAEATVETR…SNDLSLNVSR (343 aa). The interval 344–560 is b; sequence EILQQDPNID…EHDMGAQMRR (217 aa). The interval 561–635 is c; the sequence is LLEAAGQAVP…LNKLLLELSN (75 aa).

Belongs to the heat shock protein 90 family. Homodimer.

It localises to the cytoplasm. Molecular chaperone. Has ATPase activity. In Saccharophagus degradans (strain 2-40 / ATCC 43961 / DSM 17024), this protein is Chaperone protein HtpG.